The following is a 366-amino-acid chain: Cyclic amide hydrolase (366 aa).

Residues 1 to 103 (MKVGVHKLAM…TLFTRAPDDG (103 aa)) form an RU A region. Substrate contacts are provided by residues R51 and 82–83 (SG). Residues 110-247 (RLALGIGITR…CEVLLFGNAP (138 aa)) are RU B. The active site involves K160. Substrate is bound by residues R192, 230 to 231 (SA), R327, and 346 to 347 (SG). Residue S230 is the Nucleophile of the active site. The RU C stretch occupies residues 253–366 (FRIGHGVLKD…AAPIAAIVRA (114 aa)).

It belongs to the cyclic amide hydrolase (CyAH) family. Homotetramer.

Its function is as follows. Cyclic amide hydrolase of unknown substrate specificity. Catalyzes the hydrolytic ring-opening of a cyclic amide. Does not act on cyanuric acid nor barbituric acid. This is Cyclic amide hydrolase from Azorhizobium caulinodans (strain ATCC 43989 / DSM 5975 / JCM 20966 / LMG 6465 / NBRC 14845 / NCIMB 13405 / ORS 571).